The chain runs to 473 residues: Glutamate--tRNA ligase (473 aa).

Residues Pro11–Gly21 carry the 'HIGH' region motif. The 'KMSKS' region signature appears at Lys240–Arg244. Lys243 contacts ATP.

It belongs to the class-I aminoacyl-tRNA synthetase family. Glutamate--tRNA ligase type 1 subfamily. In terms of assembly, monomer.

It is found in the cytoplasm. The catalysed reaction is tRNA(Glu) + L-glutamate + ATP = L-glutamyl-tRNA(Glu) + AMP + diphosphate. Its function is as follows. Catalyzes the attachment of glutamate to tRNA(Glu) in a two-step reaction: glutamate is first activated by ATP to form Glu-AMP and then transferred to the acceptor end of tRNA(Glu). The protein is Glutamate--tRNA ligase of Rhodopseudomonas palustris (strain HaA2).